Reading from the N-terminus, the 155-residue chain is Probable ribosome biogenesis protein RLP24 (155 aa).

Belongs to the eukaryotic ribosomal protein eL24 family.

This Encephalitozoon cuniculi (strain GB-M1) (Microsporidian parasite) protein is Probable ribosome biogenesis protein RLP24 (RPL24).